Consider the following 399-residue polypeptide: Semaphorin-like protein 139 (399 aa).

A signal peptide spans 1–14; sequence MIPLLFILFYFTNC. Positions 15-399 constitute a Sema domain; that stretch reads IEWHKFETSE…IPRMKKILKM (385 aa).

The protein belongs to the semaphorin family. In terms of assembly, interacts with host VESPR.

Its subcellular location is the secreted. Acts as a semaphorin-like protein and binds to host plexin C1 receptor. May alter the movement of plexin C1-expressing cells including dendritic cells, monocytes, or granulocytes in the proximity of infected cells. May also regulate host cell cytoskeleton of neighboring cells to improve viral infection. This Ectromelia virus (strain Moscow) (ECTV) protein is Semaphorin-like protein 139 (EVM139).